Consider the following 407-residue polypeptide: Argininosuccinate synthase (407 aa).

ATP contacts are provided by residues 13-21 (AYSGGLDTS) and A40. L-citrulline is bound by residues Y91 and S96. G121 is an ATP binding site. The L-aspartate site is built by T123, N127, and D128. N127 contributes to the L-citrulline binding site. Positions 131, 182, 191, 267, and 279 each coordinate L-citrulline.

It belongs to the argininosuccinate synthase family. Type 1 subfamily. As to quaternary structure, homotetramer.

It localises to the cytoplasm. The enzyme catalyses L-citrulline + L-aspartate + ATP = 2-(N(omega)-L-arginino)succinate + AMP + diphosphate + H(+). The protein operates within amino-acid biosynthesis; L-arginine biosynthesis; L-arginine from L-ornithine and carbamoyl phosphate: step 2/3. In Rhizobium etli (strain ATCC 51251 / DSM 11541 / JCM 21823 / NBRC 15573 / CFN 42), this protein is Argininosuccinate synthase.